The following is a 163-amino-acid chain: Protein YtsP (163 aa).

It belongs to the free Met sulfoxide reductase family.

The polypeptide is Protein YtsP (ytsP) (Bacillus subtilis (strain 168)).